The primary structure comprises 228 residues: Uracil-DNA glycosylase (228 aa).

Residue Asp-64 is the Proton acceptor of the active site.

Belongs to the uracil-DNA glycosylase (UDG) superfamily. UNG family.

It is found in the cytoplasm. The enzyme catalyses Hydrolyzes single-stranded DNA or mismatched double-stranded DNA and polynucleotides, releasing free uracil.. Functionally, excises uracil residues from the DNA which can arise as a result of misincorporation of dUMP residues by DNA polymerase or due to deamination of cytosine. The sequence is that of Uracil-DNA glycosylase from Yersinia pseudotuberculosis serotype IB (strain PB1/+).